The sequence spans 84 residues: Small ribosomal subunit protein bS20 (84 aa).

A disordered region spans residues 1-25; that stretch reads MANIVSNEKTYRHTQKVRKENHAKM.

Belongs to the bacterial ribosomal protein bS20 family.

In terms of biological role, binds directly to 16S ribosomal RNA. This is Small ribosomal subunit protein bS20 from Ureaplasma urealyticum serovar 10 (strain ATCC 33699 / Western).